Consider the following 1389-residue polypeptide: MAKPALKAAKEALVVKNYELAIEQSKKALSFDANNYNANVFLGVAYFSTKQLSESKEAYLDAIKIDEKAVLAWQGLWNLYESTHDISELHKITPILASKFLELEEQNKCLNTVNKYMEVVKKYGNKADEFKALKLLTPEEGEIYEYLEGRVLPLQTVYMQMVDIQESMDRCYFESEVNKRKTRLGARLEQVMRDVELEIYKDSPLETLYNQIINYAETDEIRRLTESKLLHMYNKLLILSEIKEKSHWRERIWDLIQGMVTLHIPEQAAWTIYFEWQDHSDISFFQSAELQEYIELFPGSPLAQALFAFRNSDLWHKEHPIQLEDSNNSAELAKETKEEDDSENSVDKKENEEDIISSTMMPQDEVLANLTEAYENAPQSTIISECLAKYYIHLKEYEYAIGLSKAALEVLKRLQQDTGVKLDKLTRIFQLCLAIGYSHYEVPRYLFQAMHYYDILLAADPRNYHALLGKGLVQIENEQYSDAVKTLGLLLDDHENDPSLSELSWCYFKTGNLPKAISTVEKCLDVLLSMDVERFKIAEAYYRYGIYILNRKSENYLEDSFSAFVSSLRKDPNYAPAYTSLGLYYRDIHDMVRATKCFQKAFELDASQVEAAEALAKTFAEANEWELVEVISRRVLNTSENDLKRKKKFNWHHTSLGVLELNAKNFHKAIVHFQSALRISPKDTNAWSGLGEAYARSGRYVSALKAFNRASILDPDDWYVKYFIATLEKDMGEYEVAVSTLSEILAVRSKELCVQVSLAETYVRLAKLYHARGFYSRAADSLEKSIQICCNVLKEDITSIFSWEILGDACLSFCQLKNYHNRFPNSLISDILFTTEAMKCANNGRQFENMIYLPDLETSSGAIFIAAVAITCFTIHLSLVADDKLLLPVSWYNLGSSYYRFYECDTTKDATLQVAINCIKQAIKLEAKNYVFWNMLGVLFSQTKAVRSAQHCYIQSLLLNERSSGVWANYGALCIQNHDVECANAAFTRSISIDPDNSQAWLGKAYCSIAVGSIRKAVQIIHHAFEISSGKMPDVNYWYADTMLHAVNTEDFVTTDGDIWSATYAIKRYLGENPTDTFAYYIKASLLEHLGETTDSVPSAIRLCELLEQEYDVSESPVILKRFIDAKALLGRLYLAKKSFENSVEQAGIALDLLEGEEDEDIKRTTLGLNLTCGTASFFLNKLEKSLDCFEKALLVSDSNADVVVLVSKVLWALGSENGKQAAREQLFEALEQSPSHIGSLLCLGAIAIYDEDDAVCSAIEDSIAHLKKDEVLRSGALKQVQIMEVLLTKKIDESMIKSLLQRFLHVYPFAASSWTLLTNRYASKSLANAFATTLYTHPSRPDDLAQSYRLQNSIDRAQVAIHLVPWDSANWKALHGVTHEALVSSDAS.

TPR repeat units lie at residues 2–35 (AKPA…DANN), 36–69 (YNAN…DEKA), and 90–123 (HKIT…VKKY). The segment at 326–355 (SNNSAELAKETKEEDDSENSVDKKENEEDI) is disordered. TPR repeat units follow at residues 381-414 (TIIS…LKRL), 429-463 (FQLC…DPRN), 465-497 (HALL…HEND), 498-530 (PSLS…LLSM), 538-574 (AEAY…DPNY), 575-608 (APAY…DASQ), 650-683 (NWHH…SPKD), 684-717 (TNAW…DPDD), 719-751 (YVKY…RSKE), 759-792 (AETY…CCNV), 931-963 (VFWN…NERS), 964-997 (SGVW…DPDN), 999-1031 (QAWL…SSGK), 1124-1157 (IDAK…LEGE), and 1167-1200 (LGLN…SDSN).

Component of the SKI complex composed of at least ski2, ski3 and ski8. The SKI complex interacts with ski7, which makes the link between the SKI complex and the exosome in order to perform mRNA degradation.

It is found in the cytoplasm. Component of the SKI complex involved in 3'-mRNA degradation pathway. The polypeptide is Superkiller protein 3 (ski3) (Schizosaccharomyces pombe (strain 972 / ATCC 24843) (Fission yeast)).